Reading from the N-terminus, the 432-residue chain is Adenylosuccinate synthetase (432 aa).

Residues 12–18 and 40–42 each bind GTP; these read GDEGKGK and GHT. Catalysis depends on Asp13, which acts as the Proton acceptor. Positions 13 and 40 each coordinate Mg(2+). IMP contacts are provided by residues 13–16, 38–41, Thr130, Arg144, Gln225, Thr240, and Arg304; these read DEGK and NAGH. His41 (proton donor) is an active-site residue. 300–306 lines the substrate pocket; that stretch reads ATTGRPR. Residues Arg306, 332–334, and 414–416 contribute to the GTP site; these read KLD and SVG.

This sequence belongs to the adenylosuccinate synthetase family. As to quaternary structure, homodimer. Mg(2+) serves as cofactor.

The protein localises to the cytoplasm. The catalysed reaction is IMP + L-aspartate + GTP = N(6)-(1,2-dicarboxyethyl)-AMP + GDP + phosphate + 2 H(+). Its pathway is purine metabolism; AMP biosynthesis via de novo pathway; AMP from IMP: step 1/2. In terms of biological role, plays an important role in the de novo pathway of purine nucleotide biosynthesis. Catalyzes the first committed step in the biosynthesis of AMP from IMP. The polypeptide is Adenylosuccinate synthetase (Anaeromyxobacter dehalogenans (strain 2CP-C)).